Consider the following 98-residue polypeptide: NADH-ubiquinone oxidoreductase chain 4L (98 aa).

The next 3 membrane-spanning stretches (helical) occupy residues 1-21 (MTLIHMNIIMAFSMSLVGLLM), 29-49 (ALLCLEGMMLSLFVLAALTIL), and 61-81 (IILLVFAACEAAIGLALLVTI).

Belongs to the complex I subunit 4L family. In terms of assembly, core subunit of respiratory chain NADH dehydrogenase (Complex I) which is composed of 45 different subunits.

Its subcellular location is the mitochondrion inner membrane. It catalyses the reaction a ubiquinone + NADH + 5 H(+)(in) = a ubiquinol + NAD(+) + 4 H(+)(out). Its function is as follows. Core subunit of the mitochondrial membrane respiratory chain NADH dehydrogenase (Complex I) which catalyzes electron transfer from NADH through the respiratory chain, using ubiquinone as an electron acceptor. Part of the enzyme membrane arm which is embedded in the lipid bilayer and involved in proton translocation. In Eubalaena australis (Southern right whale), this protein is NADH-ubiquinone oxidoreductase chain 4L (MT-ND4L).